The following is a 243-amino-acid chain: Orotidine 5'-phosphate decarboxylase (243 aa).

Substrate-binding positions include Asp19, Lys41, Asp69 to Thr78, Thr124, Arg185, Gln194, Gly214, and Arg215. The active-site Proton donor is the Lys71.

The protein belongs to the OMP decarboxylase family. Type 1 subfamily. Homodimer.

The enzyme catalyses orotidine 5'-phosphate + H(+) = UMP + CO2. It functions in the pathway pyrimidine metabolism; UMP biosynthesis via de novo pathway; UMP from orotate: step 2/2. Catalyzes the decarboxylation of orotidine 5'-monophosphate (OMP) to uridine 5'-monophosphate (UMP). The chain is Orotidine 5'-phosphate decarboxylase from Xanthomonas campestris pv. campestris (strain 8004).